A 398-amino-acid polypeptide reads, in one-letter code: Bifunctional enzyme IspD/IspF (398 aa).

The interval 1-234 (MPSSKRTAAI…ARLAAALGDI (234 aa)) is 2-C-methyl-D-erythritol 4-phosphate cytidylyltransferase. A 2-C-methyl-D-erythritol 2,4-cyclodiphosphate synthase region spans residues 235–398 (RTGTGYDVHA…LPWNDKGRDT (164 aa)). Positions 241 and 243 each coordinate a divalent metal cation. 4-CDP-2-C-methyl-D-erythritol 2-phosphate is bound by residues 241-243 (DVH) and 267-268 (HS). An a divalent metal cation-binding site is contributed by histidine 275. Residues 289–291 (DIG), 365–368 (TTSE), phenylalanine 372, and arginine 375 contribute to the 4-CDP-2-C-methyl-D-erythritol 2-phosphate site.

This sequence in the N-terminal section; belongs to the IspD/TarI cytidylyltransferase family. IspD subfamily. The protein in the C-terminal section; belongs to the IspF family. It depends on a divalent metal cation as a cofactor.

It catalyses the reaction 2-C-methyl-D-erythritol 4-phosphate + CTP + H(+) = 4-CDP-2-C-methyl-D-erythritol + diphosphate. The catalysed reaction is 4-CDP-2-C-methyl-D-erythritol 2-phosphate = 2-C-methyl-D-erythritol 2,4-cyclic diphosphate + CMP. Its pathway is isoprenoid biosynthesis; isopentenyl diphosphate biosynthesis via DXP pathway; isopentenyl diphosphate from 1-deoxy-D-xylulose 5-phosphate: step 2/6. It functions in the pathway isoprenoid biosynthesis; isopentenyl diphosphate biosynthesis via DXP pathway; isopentenyl diphosphate from 1-deoxy-D-xylulose 5-phosphate: step 4/6. In terms of biological role, bifunctional enzyme that catalyzes the formation of 4-diphosphocytidyl-2-C-methyl-D-erythritol from CTP and 2-C-methyl-D-erythritol 4-phosphate (MEP) (IspD), and catalyzes the conversion of 4-diphosphocytidyl-2-C-methyl-D-erythritol 2-phosphate (CDP-ME2P) to 2-C-methyl-D-erythritol 2,4-cyclodiphosphate (ME-CPP) with a corresponding release of cytidine 5-monophosphate (CMP) (IspF). The sequence is that of Bifunctional enzyme IspD/IspF from Nitrobacter winogradskyi (strain ATCC 25391 / DSM 10237 / CIP 104748 / NCIMB 11846 / Nb-255).